Consider the following 219-residue polypeptide: Ribosomal RNA large subunit methyltransferase E (219 aa).

S-adenosyl-L-methionine is bound by residues G60, W62, D85, D101, and D126. The active-site Proton acceptor is the K166.

It belongs to the class I-like SAM-binding methyltransferase superfamily. RNA methyltransferase RlmE family.

It localises to the cytoplasm. The enzyme catalyses uridine(2552) in 23S rRNA + S-adenosyl-L-methionine = 2'-O-methyluridine(2552) in 23S rRNA + S-adenosyl-L-homocysteine + H(+). In terms of biological role, specifically methylates the uridine in position 2552 of 23S rRNA at the 2'-O position of the ribose in the fully assembled 50S ribosomal subunit. The polypeptide is Ribosomal RNA large subunit methyltransferase E (Bordetella avium (strain 197N)).